The sequence spans 179 residues: Large ribosomal subunit protein uL5 (179 aa).

The protein belongs to the universal ribosomal protein uL5 family. Part of the 50S ribosomal subunit; part of the 5S rRNA/L5/L18/L25 subcomplex. Contacts the 5S rRNA and the P site tRNA. Forms a bridge to the 30S subunit in the 70S ribosome.

Functionally, this is one of the proteins that bind and probably mediate the attachment of the 5S RNA into the large ribosomal subunit, where it forms part of the central protuberance. In the 70S ribosome it contacts protein S13 of the 30S subunit (bridge B1b), connecting the 2 subunits; this bridge is implicated in subunit movement. Contacts the P site tRNA; the 5S rRNA and some of its associated proteins might help stabilize positioning of ribosome-bound tRNAs. This chain is Large ribosomal subunit protein uL5, found in Syntrophus aciditrophicus (strain SB).